A 1846-amino-acid polypeptide reads, in one-letter code: Insulin-like receptor (1846 aa).

Residues Asn113, Asn180, and Asn364 are each glycosylated (N-linked (GlcNAc...) asparagine). 5 disulfides stabilise this stretch: Cys371-Cys386, Cys393-Cys401, Cys397-Cys410, Cys413-Cys422, and Cys426-Cys438. Residue Asn453 is glycosylated (N-linked (GlcNAc...) asparagine). 2 disulfide bridges follow: Cys469-Cys483 and Cys486-Cys490. Asn518 is a glycosylation site (N-linked (GlcNAc...) asparagine). Cys615 and Cys646 form a disulfide bridge. Residues Asn652, Asn671, and Asn696 are each glycosylated (N-linked (GlcNAc...) asparagine). Fibronectin type-III domains are found at residues 775-869 (TPDP…TMMG), 969-1067 (KPSS…LKRT), and 1077-1179 (LNET…TPGF). The disordered stretch occupies residues 944–980 (EKAENLGKAPKTLGGKKPLIHISKKKPSSSSTTSTPA). Over residues 961-970 (PLIHISKKKP) the composition is skewed to basic residues. At 970-1183 (PSSSSTTSTP…VMTPGFFTVE (214 aa)) the chain is on the extracellular side. A compositionally biased stretch (low complexity) spans 971–980 (SSSSTTSTPA). 5 N-linked (GlcNAc...) asparagine glycosylation sites follow: Asn1017, Asn1047, Asn1078, Asn1087, and Asn1093. The chain crosses the membrane as a helical span at residues 1184–1204 (IILGMLLVFLILMSIAGCIIY). The Cytoplasmic segment spans residues 1205–1846 (YYIQVRYGKK…IEDNEHHPLV (642 aa)). A Protein kinase domain is found at 1246 to 1528 (VVLGQQCGEG…LLAAEASPEF (283 aa)). ATP-binding positions include 1252–1260 (CGEGSFGKV) and Lys1282. The active-site Proton acceptor is the Asp1388. Disordered regions lie at residues 1718–1742 (ISSMDTRRSTGASSSSYGVPQTNWS) and 1769–1826 (QQQQ…IFNG). Positions 1726–1742 (STGASSSSYGVPQTNWS) are enriched in polar residues. A compositionally biased stretch (low complexity) spans 1808 to 1821 (YRNNGSPSRNGNSR).

It belongs to the protein kinase superfamily. Tyr protein kinase family. Insulin receptor subfamily. As to quaternary structure, tetramer of 2 alpha and 2 beta chains linked by disulfide bonds. The alpha chains contribute to the formation of the ligand-binding domain, while the beta chains carry the kinase domain. Interacts (via cytoplasmic domain) with shc-1 (PID domain). Interacts (via kinase domain) with daf-18 (via C-terminus). In terms of assembly, interacts with casy-1; promoting axonal localization. Requires Mg(2+) as cofactor.

It localises to the membrane. It is found in the cell projection. The protein localises to the axon. The enzyme catalyses L-tyrosyl-[protein] + ATP = O-phospho-L-tyrosyl-[protein] + ADP + H(+). With respect to regulation, autophosphorylation activates the kinase activity. Interaction with shc-1 may inhibit its activity. In terms of biological role, insulin receptor-like tyrosine kinase which regulates metabolism, controls longevity and prevents developmental arrest at the dauer stage. Binding of INS family members may either stimulate, or antagonize, association of the receptor with downstream mediators such as pdk-1 and age-1. Required for germline progenitor proliferation during larval development. Plays a role in maintaining gonad integrity in a daf-16/FOXO-dependent manner. Required for the response to environmental stimuli such as light, food, pheromone, and temperature. Negatively regulates resistance to UV and oxidative stress. In a daf-16/FOXO-dependent manner, plays a role in regulating the response to white light. Role in immune function and pathogen resistance. Negatively regulates autophagy. Regulates daf-18/PTEN protein levels. Plays a role in controlling seam cell development during the larval stages. Required for taste avoidance learning in the cell body of ASER gustatory neurons. Functionally, required for taste avoidance learning in axons of ASER gustatory neurons. In Caenorhabditis elegans, this protein is Insulin-like receptor.